The chain runs to 359 residues: Cytochrome c oxidase subunit 2 (359 aa).

Residues 1-28 (MEQQNKRGLKRKALLGGVLGLGGLAMAG) form the signal peptide. Cys-29 is lipidated: S-diacylglycerol cysteine. 2 helical membrane-spanning segments follow: residues 64 to 84 (VWVAAWIIGIIMWGLFLTAIF) and 107 to 127 (VPLELVLTIVPIIIVMVLFFF). Positions 168–203 (PGGQDYQGSDPERQAAAEASKKDPSGDNPIHGNSKS) are disordered. A compositionally biased stretch (basic and acidic residues) spans 177–192 (DPERQAAAEASKKDPS). His-244, Cys-285, Glu-287, Cys-289, His-293, and Met-296 together coordinate Cu cation. A disordered region spans residues 335–359 (YATSTSPFVSDRTATRDGENTQSNA).

In terms of assembly, associates with subunits I, III and IV to form cytochrome c oxidase. The 4 subunit cytochrome c oxidase forms a supercomplex with the menaquinol-cytochrome c reductase complex (cytochrome bc1). It depends on binuclear copper center (CuA) as a cofactor.

It is found in the cell membrane. It carries out the reaction 4 Fe(II)-[cytochrome c] + O2 + 8 H(+)(in) = 4 Fe(III)-[cytochrome c] + 2 H2O + 4 H(+)(out). Its function is as follows. Subunits I and II form the functional core of the enzyme complex. Electrons originating in cytochrome c are transferred via heme a and Cu(A) to the binuclear center formed by heme a3 and Cu(B). In Corynebacterium glutamicum (strain ATCC 13032 / DSM 20300 / JCM 1318 / BCRC 11384 / CCUG 27702 / LMG 3730 / NBRC 12168 / NCIMB 10025 / NRRL B-2784 / 534), this protein is Cytochrome c oxidase subunit 2 (ctaC).